The following is a 1407-amino-acid chain: MKDLLKFLKAQTKTEEFDAIKIALASPDMIRSWSFGEVKKPETINYRTFKPERDGLFCARIFGPVKDYECLCGKYKRLKHRGVICEKCGVEVTQTKVRRERMGHIELASPTAHIWFLKSLPSRIGLLLDMPLRDIERVLYFESYVVIEGGMTNLERQQILTEEQYLDALEEFGDEFDAKMGAEAIQALLKSMDLEQECETLREELNETNSETKRKKLTKRIKLLEAFVQSGNKPEWMILTVLPVLPPDLRPLVPLDGGRFATSDLNDLYRRVINRNNRLKRLLDLAAPDIIVRNEKRMLQEAVDALLDNGRRGRAITGSNKRPLKSLADMIKGKQGRFRQNLLGKRVDYSGRSVITVGPYLRLHQCGLPKKMALELFKPFIYGKLELRGLATTIKAAKKMVEREEAVVWDILDEVIREHPVLLNRAPTLHRLGIQAFEPVLIEGKAIQLHPLVCAAYNADFDGDQMAVHVPLTLEAQLEARALMMSTNNILSPANGEPIIVPSQDVVLGLYYMTRDCVNAKGEGMVLTGPKEAERIYRAGLASLHARVKVRITEYEKDENGEFVAHTSLKDTTVGRAILWMIVPKGLPFSIVNQALGKKAISKMLNTCYRILGLKPTVIFADQTMYTGFAYAARSGASVGIDDMVIPEKKHEIISEAEAEVAEIQEQFQSGLVTAGERYNKVIDIWAAANDRVSKAMMDNLQTETVINRDGQEEQQVSFNSIYMMADSGARGSAAQIRQLAGMRGLMAKPDGSIIETPITANFREGLNVLQYFISTHGARKGLADTALKTANSGYLTRRLVDVAQDLVVTEDDCGTHEGILMTPVIEGGDVKEPLRDRVLGRVTAEDVLNPGTADILVPRNTLLHEQWCDLLEANSVDAVKVRSVVSCDTDFGVCAHCYGRDLARGHIINKGEAIGVIAAQSIGEPGTQLTMRTFHIGGAASRAAAESSIQVKNKGSIKLSNVKSVVNSSGKLVITSRNTELKLIDEFGRTKESYKVPYGAVMAKGDGEQVAGGETVANWDPHTMPVITEVSGFIRFTDMIDGQTITRQTDELTGLSSLVVLDSAERTTGGKDLRPALKIVDAQGNDVLIPGTDMPAQYFLPGKAIVQLEDGVQISSGDTLARIPQESGGTKDITGGLPRVADLFEARRPKEPAILAEIAGIVSFGKETKGKRRLVITPVDGSDPYEEMIPKWRQLNVFEGERVERGDVISDGPEAPHDILRLRGVHAVTRYIVNEVQDVYRLQGVKINDKHIEVIVRQMLRKATIESAGSSDFLEGEQVEYSRVKIANRELEANGKVGATFSRDLLGITKASLATESFISAASFQETTRVLTEAAVAGKRDELRGLKENVIVGRLIPAGTGYAYHQDRMRRRAAGEQLATPQVTAEDASASLAELLNAGLGGSDNE.

Zn(2+) is bound by residues cysteine 70, cysteine 72, cysteine 85, and cysteine 88. Mg(2+)-binding residues include aspartate 460, aspartate 462, and aspartate 464. Zn(2+) is bound by residues cysteine 814, cysteine 888, cysteine 895, and cysteine 898.

The protein belongs to the RNA polymerase beta' chain family. The RNAP catalytic core consists of 2 alpha, 1 beta, 1 beta' and 1 omega subunit. When a sigma factor is associated with the core the holoenzyme is formed, which can initiate transcription. Requires Mg(2+) as cofactor. It depends on Zn(2+) as a cofactor.

The enzyme catalyses RNA(n) + a ribonucleoside 5'-triphosphate = RNA(n+1) + diphosphate. Functionally, DNA-dependent RNA polymerase catalyzes the transcription of DNA into RNA using the four ribonucleoside triphosphates as substrates. This chain is DNA-directed RNA polymerase subunit beta', found in Salmonella paratyphi A (strain ATCC 9150 / SARB42).